Reading from the N-terminus, the 118-residue chain is D-dopachrome decarboxylase (118 aa).

The residue at position 2 (proline 2) is an N-acetylproline.

This sequence belongs to the MIF family. Homotrimer.

It is found in the cytoplasm. The enzyme catalyses D-dopachrome + H(+) = 5,6-dihydroxyindole + CO2. In terms of biological role, tautomerization of D-dopachrome with decarboxylation to give 5,6-dihydroxyindole (DHI). The protein is D-dopachrome decarboxylase (ddt) of Xenopus tropicalis (Western clawed frog).